The following is a 641-amino-acid chain: 1-deoxy-D-xylulose-5-phosphate synthase (641 aa).

Thiamine diphosphate-binding positions include His71 and 112–114; that span reads SHA. Asp144 lines the Mg(2+) pocket. Thiamine diphosphate is bound by residues 145–146, Asn173, Tyr284, and Glu365; that span reads GA. Asn173 provides a ligand contact to Mg(2+).

It belongs to the transketolase family. DXPS subfamily. Homodimer. Mg(2+) is required as a cofactor. Requires thiamine diphosphate as cofactor.

It carries out the reaction D-glyceraldehyde 3-phosphate + pyruvate + H(+) = 1-deoxy-D-xylulose 5-phosphate + CO2. It functions in the pathway metabolic intermediate biosynthesis; 1-deoxy-D-xylulose 5-phosphate biosynthesis; 1-deoxy-D-xylulose 5-phosphate from D-glyceraldehyde 3-phosphate and pyruvate: step 1/1. Catalyzes the acyloin condensation reaction between C atoms 2 and 3 of pyruvate and glyceraldehyde 3-phosphate to yield 1-deoxy-D-xylulose-5-phosphate (DXP). The protein is 1-deoxy-D-xylulose-5-phosphate synthase of Mycobacterium avium (strain 104).